A 376-amino-acid polypeptide reads, in one-letter code: Queuine tRNA-ribosyltransferase (376 aa).

Aspartate 90 acts as the Proton acceptor in catalysis. Substrate contacts are provided by residues 90 to 94 (DSGGF), aspartate 144, glutamine 193, and glycine 220. An RNA binding region spans residues 251-257 (GVGTPED). Catalysis depends on aspartate 270, which acts as the Nucleophile. Residues 275–279 (TRNAR) are RNA binding; important for wobble base 34 recognition. 4 residues coordinate Zn(2+): cysteine 308, cysteine 310, cysteine 313, and histidine 339.

This sequence belongs to the queuine tRNA-ribosyltransferase family. Homodimer. Within each dimer, one monomer is responsible for RNA recognition and catalysis, while the other monomer binds to the replacement base PreQ1. Requires Zn(2+) as cofactor.

It catalyses the reaction 7-aminomethyl-7-carbaguanine + guanosine(34) in tRNA = 7-aminomethyl-7-carbaguanosine(34) in tRNA + guanine. It participates in tRNA modification; tRNA-queuosine biosynthesis. Catalyzes the base-exchange of a guanine (G) residue with the queuine precursor 7-aminomethyl-7-deazaguanine (PreQ1) at position 34 (anticodon wobble position) in tRNAs with GU(N) anticodons (tRNA-Asp, -Asn, -His and -Tyr). Catalysis occurs through a double-displacement mechanism. The nucleophile active site attacks the C1' of nucleotide 34 to detach the guanine base from the RNA, forming a covalent enzyme-RNA intermediate. The proton acceptor active site deprotonates the incoming PreQ1, allowing a nucleophilic attack on the C1' of the ribose to form the product. After dissociation, two additional enzymatic reactions on the tRNA convert PreQ1 to queuine (Q), resulting in the hypermodified nucleoside queuosine (7-(((4,5-cis-dihydroxy-2-cyclopenten-1-yl)amino)methyl)-7-deazaguanosine). The sequence is that of Queuine tRNA-ribosyltransferase from Cupriavidus necator (strain ATCC 17699 / DSM 428 / KCTC 22496 / NCIMB 10442 / H16 / Stanier 337) (Ralstonia eutropha).